The primary structure comprises 171 residues: Large ribosomal subunit protein uL10 (171 aa).

It belongs to the universal ribosomal protein uL10 family. In terms of assembly, part of the ribosomal stalk of the 50S ribosomal subunit. The N-terminus interacts with L11 and the large rRNA to form the base of the stalk. The C-terminus forms an elongated spine to which L12 dimers bind in a sequential fashion forming a multimeric L10(L12)X complex.

Functionally, forms part of the ribosomal stalk, playing a central role in the interaction of the ribosome with GTP-bound translation factors. This chain is Large ribosomal subunit protein uL10, found in Nitrosomonas europaea (strain ATCC 19718 / CIP 103999 / KCTC 2705 / NBRC 14298).